The following is a 596-amino-acid chain: MNTAIQAALDHAVQTLQQEGVLPSDWNNSSNLTRTKDRSHGDFASNIAMIGSKAAGMKPRDLAEKILAALPEVADISKAEIAGPGFINFFLNADQRFAILDQIQAQKESFGRSQSNAAKKIQVEFVSANPTSSLHVGHGRGAAYGMTVANLLEATGAKVDREYYVNDAGRQMDILATSTYLRYLELLGQNLVFPKNAYQGDYVKEIAQGIIDKDGDAYVREVANVYKDVPEDVQYAEELDSEGNKVVLSGDKEKHIDGLIANSQQLLGEGYRVFHQAALHAILDDIKDDLADFGVTFNQWFSEASLSAKIDEALETLDQRGFLYEKDGNIWFKSTEFGDEKDRVVKRRNGQTTYFASDIAYHLNKLQRGYTDLVDIWGSDHHGYISRVKAAIDAMGYDSKKLTVLLVQFVSLWRGGEMVQMSSRSGQFVTLRDLRKEVGNDAARFYYVMRKSEQHIDFDLDLAVSQSKDNAVYYIQYAHARICRMLEKAASTGLQFEVSAARSHAARLSLDAETEILAKLAAYPDVVLRAANAYEPHQVGNYLKELAALFHGWYNEHKVLSDDAELTQARLLLSINVQQVLRNGLELLGVSAPEAM.

The 'HIGH' region motif lies at 128-138 (ANPTSSLHVGH).

It belongs to the class-I aminoacyl-tRNA synthetase family. As to quaternary structure, monomer.

It localises to the cytoplasm. The enzyme catalyses tRNA(Arg) + L-arginine + ATP = L-arginyl-tRNA(Arg) + AMP + diphosphate. This Acinetobacter baumannii (strain AB307-0294) protein is Arginine--tRNA ligase.